Reading from the N-terminus, the 208-residue chain is UPF0316 protein SERP1448 (208 aa).

The next 3 helical transmembrane spans lie at 8 to 28, 40 to 60, and 66 to 86; these read PWLM…FLTM, VAAV…GLVM, and IQNI…GMKI.

Belongs to the UPF0316 family.

The protein localises to the cell membrane. In Staphylococcus epidermidis (strain ATCC 35984 / DSM 28319 / BCRC 17069 / CCUG 31568 / BM 3577 / RP62A), this protein is UPF0316 protein SERP1448.